Consider the following 315-residue polypeptide: C1GALT1-specific chaperone 1-like protein (315 aa).

Residues 1-8 (MVSASGTS) are Cytoplasmic-facing. A helical; Signal-anchor for type II membrane protein transmembrane segment spans residues 9 to 29 (FFKGMLLGSISWVLITMFGQI). The Lumenal portion of the chain corresponds to 30–315 (HIRHRGQTQD…FLPPVGSEND (286 aa)). N-linked (GlcNAc...) asparagine glycans are attached at residues N55 and N301.

It belongs to the glycosyltransferase 31 family. Beta3-Gal-T subfamily.

Its subcellular location is the membrane. The chain is C1GALT1-specific chaperone 1-like protein from Homo sapiens (Human).